Consider the following 145-residue polypeptide: Photosystem I reaction center subunit XI (145 aa).

A run of 3 helical transmembrane segments spans residues Leu48–Leu68, Leu75–Ile95, and Ile125–Ala145.

Belongs to the PsaL family.

The protein localises to the plastid. It localises to the chloroplast thylakoid membrane. The protein is Photosystem I reaction center subunit XI of Isochrysis galbana (Marine planktonic alga).